The chain runs to 310 residues: MIIVTGGAGFIGSNIVKALNDKGITDILVVDNLKDGTKFVNLVDLNIADYMDKEDFLIQIMSGEELGDIEAIFHEGACSSTTEWDGKYMMDNNYQYSKELLHYCLEREIPFLYASSAATYGGRTSDFIESREYEKPLNVYGYSKFLFDEYVRQILPEANSQIVGFRYFNVYGPREGHKGSMASVAFHLNTQLNNGESPKLFEGSENFKRDFVYVGDVAAVNLWFLESGKSGIFNLGTGRAESFQAVADATLAYHKKSSIEYIPFPDKLKGRYQAFTQADLTNLRNAGYDKPFKTVAEGVTEYMAWLNRDA.

NADP(+) contacts are provided by residues 10 to 11, 31 to 32, K38, K53, 75 to 79, and N92; these read FI, DN, and EGACS. Y140 serves as the catalytic Proton acceptor. K144 is a binding site for NADP(+). Residue N169 coordinates substrate. Residues V170 and K178 each coordinate NADP(+). Residue K178 is the Proton acceptor of the active site. Residues S180, H187, 201-204, R209, and Y272 each bind substrate; that span reads FEGS.

It belongs to the NAD(P)-dependent epimerase/dehydratase family. HldD subfamily. In terms of assembly, homopentamer. Requires NADP(+) as cofactor.

The enzyme catalyses ADP-D-glycero-beta-D-manno-heptose = ADP-L-glycero-beta-D-manno-heptose. Its pathway is nucleotide-sugar biosynthesis; ADP-L-glycero-beta-D-manno-heptose biosynthesis; ADP-L-glycero-beta-D-manno-heptose from D-glycero-beta-D-manno-heptose 7-phosphate: step 4/4. Its function is as follows. Catalyzes the interconversion between ADP-D-glycero-beta-D-manno-heptose and ADP-L-glycero-beta-D-manno-heptose via an epimerization at carbon 6 of the heptose. This Salmonella dublin (strain CT_02021853) protein is ADP-L-glycero-D-manno-heptose-6-epimerase.